A 450-amino-acid chain; its full sequence is MLDKLGQNLSEALNKIKNATFVDKKLVKEVIKDIQKALIQSDVNVKLVFNMSKEIERKAIEEAPPKGFSKKEHIIKIVYDELVKLLGENPQKLELDPSKKSVILLVGIQGSGKTTSSAKLARYIQKKGMKPALIAADIYRPAAYQQLKQLSEKINVPLFGDETKTKTPVEIVKEGIEKLKKSDVLIIDTAGRHKEEESLLEEMKQMKEITNPNEIILVIDGTLGQQAKNQAKAFKDAVSEIGSILVTKLDGSAKGGGALSAVAEINAPIKFIGTGEGVDNLETFDPKKFISRLLGMGDLDSLLEKTEDVMDESTEESIDSILKGKFTLVELYAQLETISKMGPMKQIMGMIPGFGGNMPKEAAQLTEQKLKRYKIMMDSMTMEEKENPELIKTSRLQRIAKGAGVKQDEIKDLLKYYATTKNAFGNLKRGKMPKMGGKMGQIMRQLMYKE.

Residues 107 to 114 (GIQGSGKT), 188 to 192 (DTAGR), and 247 to 250 (TKLD) contribute to the GTP site.

This sequence belongs to the GTP-binding SRP family. SRP54 subfamily. Part of the signal recognition particle protein translocation system, which is composed of SRP and FtsY. Archaeal SRP consists of a 7S RNA molecule of 300 nucleotides and two protein subunits: SRP54 and SRP19.

The protein resides in the cytoplasm. It catalyses the reaction GTP + H2O = GDP + phosphate + H(+). In terms of biological role, involved in targeting and insertion of nascent membrane proteins into the cytoplasmic membrane. Binds to the hydrophobic signal sequence of the ribosome-nascent chain (RNC) as it emerges from the ribosomes. The SRP-RNC complex is then targeted to the cytoplasmic membrane where it interacts with the SRP receptor FtsY. This Methanococcus vannielii (strain ATCC 35089 / DSM 1224 / JCM 13029 / OCM 148 / SB) protein is Signal recognition particle 54 kDa protein.